Consider the following 162-residue polypeptide: Phosphopantetheine adenylyltransferase (162 aa).

Substrate is bound at residue Thr-10. Residues 10–11 and His-18 contribute to the ATP site; that span reads TF. Residues Lys-42, Leu-74, and Arg-88 each coordinate substrate. Residues 89–91, Glu-99, and 124–130 each bind ATP; these read GLR and YAFLSSS.

The protein belongs to the bacterial CoaD family. Homohexamer. The cofactor is Mg(2+).

The protein resides in the cytoplasm. The catalysed reaction is (R)-4'-phosphopantetheine + ATP + H(+) = 3'-dephospho-CoA + diphosphate. It participates in cofactor biosynthesis; coenzyme A biosynthesis; CoA from (R)-pantothenate: step 4/5. In terms of biological role, reversibly transfers an adenylyl group from ATP to 4'-phosphopantetheine, yielding dephospho-CoA (dPCoA) and pyrophosphate. The protein is Phosphopantetheine adenylyltransferase of Methylococcus capsulatus (strain ATCC 33009 / NCIMB 11132 / Bath).